Here is a 245-residue protein sequence, read N- to C-terminus: Probable membrane transporter protein YdhB (245 aa).

8 helical membrane passes run 1-21, 34-56, 71-91, 98-118, 137-157, 177-197, 199-219, and 225-245; these read MLII…GAGG, HIPI…LSGA, LIVG…TSFI, YLTA…LFIL, ILGI…APFI, MLVI…EGFV, YVLL…GAKF, and KVVL…LLLF.

The protein belongs to the 4-toluene sulfonate uptake permease (TSUP) (TC 2.A.102) family.

Its subcellular location is the cell membrane. The chain is Probable membrane transporter protein YdhB (ydhB) from Bacillus subtilis (strain 168).